The primary structure comprises 90 residues: Auxin-responsive protein SAUR23 (90 aa).

Belongs to the ARG7 family.

Its subcellular location is the cell membrane. Functions as a positive effector of cell expansion through modulation of auxin transport. The chain is Auxin-responsive protein SAUR23 from Arabidopsis thaliana (Mouse-ear cress).